A 202-amino-acid chain; its full sequence is Inner membrane-spanning protein YciB (202 aa).

A run of 6 helical transmembrane segments spans residues 3-23 (ILFDLLPVILFFVAYKIAGGN), 46-66 (ILLATAVAILATIAQIGWVWM), 73-93 (TMLWISLAIIAVFGGATLFFH), 100-120 (WKPTALYWLFGGTLTVSAVIF), 145-165 (LAWAGFFILMGFLNLYVAYNF), and 173-193 (FKLFGGMGLMLLFVLGQGFYL).

Belongs to the YciB family.

The protein localises to the cell inner membrane. Plays a role in cell envelope biogenesis, maintenance of cell envelope integrity and membrane homeostasis. The chain is Inner membrane-spanning protein YciB from Aromatoleum aromaticum (strain DSM 19018 / LMG 30748 / EbN1) (Azoarcus sp. (strain EbN1)).